A 449-amino-acid polypeptide reads, in one-letter code: Bifunctional protein GlmU (449 aa).

The interval Met-1–Arg-228 is pyrophosphorylase. Residues Leu-8 to Gly-11, Lys-22, Gln-75, Gly-80 to Thr-81, Tyr-103 to Asp-105, Gly-140, Glu-154, Asn-169, and Asn-226 each bind UDP-N-acetyl-alpha-D-glucosamine. Asp-105 contributes to the Mg(2+) binding site. Residue Asn-226 coordinates Mg(2+). The segment at Ala-229–Ile-249 is linker. The segment at Gly-250 to Gly-449 is N-acetyltransferase. UDP-N-acetyl-alpha-D-glucosamine contacts are provided by Arg-315 and Lys-333. Residue His-345 is the Proton acceptor of the active site. UDP-N-acetyl-alpha-D-glucosamine is bound by residues Tyr-348 and Asn-359. Residues Ala-362, Asn-368–Tyr-369, Ser-387, Thr-405, and Arg-422 contribute to the acetyl-CoA site.

In the N-terminal section; belongs to the N-acetylglucosamine-1-phosphate uridyltransferase family. It in the C-terminal section; belongs to the transferase hexapeptide repeat family. In terms of assembly, homotrimer. The cofactor is Mg(2+).

It is found in the cytoplasm. It catalyses the reaction alpha-D-glucosamine 1-phosphate + acetyl-CoA = N-acetyl-alpha-D-glucosamine 1-phosphate + CoA + H(+). The catalysed reaction is N-acetyl-alpha-D-glucosamine 1-phosphate + UTP + H(+) = UDP-N-acetyl-alpha-D-glucosamine + diphosphate. The protein operates within nucleotide-sugar biosynthesis; UDP-N-acetyl-alpha-D-glucosamine biosynthesis; N-acetyl-alpha-D-glucosamine 1-phosphate from alpha-D-glucosamine 6-phosphate (route II): step 2/2. It functions in the pathway nucleotide-sugar biosynthesis; UDP-N-acetyl-alpha-D-glucosamine biosynthesis; UDP-N-acetyl-alpha-D-glucosamine from N-acetyl-alpha-D-glucosamine 1-phosphate: step 1/1. It participates in bacterial outer membrane biogenesis; LPS lipid A biosynthesis. Its function is as follows. Catalyzes the last two sequential reactions in the de novo biosynthetic pathway for UDP-N-acetylglucosamine (UDP-GlcNAc). The C-terminal domain catalyzes the transfer of acetyl group from acetyl coenzyme A to glucosamine-1-phosphate (GlcN-1-P) to produce N-acetylglucosamine-1-phosphate (GlcNAc-1-P), which is converted into UDP-GlcNAc by the transfer of uridine 5-monophosphate (from uridine 5-triphosphate), a reaction catalyzed by the N-terminal domain. The sequence is that of Bifunctional protein GlmU from Ruegeria sp. (strain TM1040) (Silicibacter sp.).